The following is a 250-amino-acid chain: Pimeloyl-[acyl-carrier protein] methyl ester esterase (250 aa).

Residues Trp-12, 71–72, and 138–142 each bind substrate; these read SL and FVALQ. Catalysis depends on Ser-71, which acts as the Nucleophile. Residues Asp-202 and His-230 contribute to the active site. His-230 contacts substrate.

The protein belongs to the AB hydrolase superfamily. Carboxylesterase BioH family. As to quaternary structure, monomer.

Its subcellular location is the cytoplasm. The catalysed reaction is 6-carboxyhexanoyl-[ACP] methyl ester + H2O = 6-carboxyhexanoyl-[ACP] + methanol + H(+). It functions in the pathway cofactor biosynthesis; biotin biosynthesis. Its function is as follows. The physiological role of BioH is to remove the methyl group introduced by BioC when the pimeloyl moiety is complete. It allows to synthesize pimeloyl-ACP via the fatty acid synthetic pathway through the hydrolysis of the ester bonds of pimeloyl-ACP esters. This is Pimeloyl-[acyl-carrier protein] methyl ester esterase from Aromatoleum aromaticum (strain DSM 19018 / LMG 30748 / EbN1) (Azoarcus sp. (strain EbN1)).